Consider the following 437-residue polypeptide: tRNA-2-methylthio-N(6)-dimethylallyladenosine synthase (437 aa).

The region spanning 1 to 115 (MKVYIETMGC…ISQVIHKEKA (115 aa)) is the MTTase N-terminal domain. Residues Cys-10, Cys-46, Cys-78, Cys-148, Cys-152, and Cys-155 each coordinate [4Fe-4S] cluster. Positions 134-367 (KKAQIRSLLN…QNRHKEILEE (234 aa)) constitute a Radical SAM core domain. The TRAM domain occupies 370–436 (KLEVGKTHVV…KGRLMATTKG (67 aa)).

Belongs to the methylthiotransferase family. MiaB subfamily. In terms of assembly, monomer. The cofactor is [4Fe-4S] cluster.

The protein resides in the cytoplasm. The catalysed reaction is N(6)-dimethylallyladenosine(37) in tRNA + (sulfur carrier)-SH + AH2 + 2 S-adenosyl-L-methionine = 2-methylsulfanyl-N(6)-dimethylallyladenosine(37) in tRNA + (sulfur carrier)-H + 5'-deoxyadenosine + L-methionine + A + S-adenosyl-L-homocysteine + 2 H(+). Functionally, catalyzes the methylthiolation of N6-(dimethylallyl)adenosine (i(6)A), leading to the formation of 2-methylthio-N6-(dimethylallyl)adenosine (ms(2)i(6)A) at position 37 in tRNAs that read codons beginning with uridine. This Helicobacter pylori (strain G27) protein is tRNA-2-methylthio-N(6)-dimethylallyladenosine synthase.